Here is an 81-residue protein sequence, read N- to C-terminus: Acyl carrier protein (81 aa).

Residues 4–79 enclose the Carrier domain; sequence AEIKDKVYDI…QAIDYIVNKK (76 aa). Ser39 is subject to O-(pantetheine 4'-phosphoryl)serine.

It belongs to the acyl carrier protein (ACP) family. 4'-phosphopantetheine is transferred from CoA to a specific serine of apo-ACP by AcpS. This modification is essential for activity because fatty acids are bound in thioester linkage to the sulfhydryl of the prosthetic group.

It is found in the cytoplasm. It participates in lipid metabolism; fatty acid biosynthesis. Carrier of the growing fatty acid chain in fatty acid biosynthesis. The protein is Acyl carrier protein of Chlorobaculum tepidum (strain ATCC 49652 / DSM 12025 / NBRC 103806 / TLS) (Chlorobium tepidum).